A 338-amino-acid chain; its full sequence is Glyceraldehyde-3-phosphate dehydrogenase (338 aa).

5 residues coordinate NAD(+): R13, I14, D35, R80, and S123. Positions 152, 153, 154, 183, 198, 212, 213, and 235 each coordinate D-glyceraldehyde 3-phosphate. Residue C153 is the Nucleophile of the active site. N317 provides a ligand contact to NAD(+).

This sequence belongs to the glyceraldehyde-3-phosphate dehydrogenase family. Homotetramer.

Its subcellular location is the tegument membrane. The enzyme catalyses D-glyceraldehyde 3-phosphate + phosphate + NAD(+) = (2R)-3-phospho-glyceroyl phosphate + NADH + H(+). It functions in the pathway carbohydrate degradation; glycolysis; pyruvate from D-glyceraldehyde 3-phosphate: step 1/5. This antigen is associated with human resistance to schistosomiasis. This chain is Glyceraldehyde-3-phosphate dehydrogenase, found in Schistosoma mansoni (Blood fluke).